Consider the following 831-residue polypeptide: V-type proton ATPase subunit a (831 aa).

Residues 1 to 418 (MSPSLFRSEE…DSYGIATYRE (418 aa)) lie on the Cytoplasmic side of the membrane. Residues 419-437 (VNHGIVAIVTFPFLFAIMF) form a helical membrane-spanning segment. The Vacuolar segment spans residues 438 to 439 (GD). A helical membrane pass occupies residues 440–456 (LGHGAIMASVALMFVLY). The Cytoplasmic portion of the chain corresponds to 457–471 (EKTLGAKKDLDEIVG). The helical transmembrane segment at 472–501 (MVFYGRYIVLLMGLFSMYVGFVYNDLFSKP) threads the bilayer. Residues 502 to 548 (MSIFSSRWVWPVKSEEAIARAVQVGTYPIGIDPTWHSADNNLLFMNS) lie on the Vacuolar side of the membrane. Residues 549 to 568 (YKMKLSIILGVIHMTFCLFL) form a helical membrane-spanning segment. The Cytoplasmic portion of the chain corresponds to 569-586 (SLSNYRFFKRKLDIYAVF). The chain crosses the membrane as a helical span at residues 587–607 (VPSLIFLEAIFGYLVITIVYK). At 608 to 650 (WCIDWKAKDLQPPSLLNMLILMFLSPGTLEDQLYPGQKYLQVG) the chain is on the vacuolar side. The chain crosses the membrane as a helical span at residues 651-670 (LVIAALICVPWLLIVKPFVL). Residues 671-723 (WRRHSNEENKYQSLNSDLPNVDEADALMAVDSQEKQAEPFELGEVVIHQVIHT) are Cytoplasmic-facing. A helical membrane pass occupies residues 724–748 (IEFCLGCVSHTASYLRLWALSLAHN). At 749 to 769 (QLSSVLWNMTLANGFRMTGIV) the chain is on the vacuolar side. The chain crosses the membrane as a helical span at residues 770 to 808 (GSIFVVILFGFWFIATCVVLVAMEGTSAMLHSLRLHWVE). Over 809-831 (GMSKHFEGEGYAFTPFTFKVTAE) the chain is Cytoplasmic.

Belongs to the V-ATPase 116 kDa subunit family. In terms of assembly, V-ATPase is a heteromultimeric enzyme composed of a peripheral catalytic V1 complex (components A to H) attached to an integral membrane V0 proton pore complex (components: a, c, c', c'', d, e, f and VOA1).

The protein localises to the vacuole membrane. In terms of biological role, subunit of the V0 complex of vacuolar(H+)-ATPase (V-ATPase), a multisubunit enzyme composed of a peripheral complex (V1) that hydrolyzes ATP and a membrane integral complex (V0) that translocates protons. V-ATPase is responsible for acidifying and maintaining the pH of intracellular compartments. This chain is V-type proton ATPase subunit a (vph1), found in Schizosaccharomyces pombe (strain 972 / ATCC 24843) (Fission yeast).